Here is a 262-residue protein sequence, read N- to C-terminus: Ferric siderophore reductase (262 aa).

Positions 244, 245, 256, and 259 each coordinate [2Fe-2S] cluster.

Monomer. [2Fe-2S] cluster is required as a cofactor.

The protein resides in the cytoplasm. It is found in the cell inner membrane. Displays pH dependent redox properties. SufD is necessary for the stability of FhuF. Functionally, siderophore-iron reductase which is involved in iron removal from the hydroxamate-type siderophores coprogen, ferrichrome and ferrioxamine B after their transport into the cell. Binds both the iron-loaded and the apo forms of ferrichrome. The protein is Ferric siderophore reductase (fhuF) of Escherichia coli (strain K12).